Consider the following 353-residue polypeptide: Inactive metacaspase-4 (353 aa).

Gly2 carries the N-myristoyl glycine lipid modification.

Belongs to the peptidase C14B family. Post-translationally, palmitoylated. In terms of processing, proteolytic cleavage by MCA3 occurs prior or during secretion and requires MCA4 membrane localization. Cleavage is dispensable for secretion and parasite growth and virulence in the mammalian host. In vitro, can be cleaved by MCA2 but specifically cleaved by MCA3 in vivo.

It localises to the cell projection. The protein resides in the cilium. It is found in the flagellum membrane. The protein localises to the secreted. In terms of biological role, inactive metacaspase which plays a role in parasite bloodstream form growth and in parasite virulence within the mammalian host. This is Inactive metacaspase-4 from Trypanosoma brucei brucei.